A 386-amino-acid chain; its full sequence is HORMA domain-containing protein 1 (386 aa).

The region spanning Thr24–Val224 is the HORMA domain. Disordered regions lie at residues Ser237–Asp274 and Glu289–Asn386. A compositionally biased stretch (polar residues) spans Glu289 to Ala313. The segment covering Gln329 to Arg343 has biased composition (basic and acidic residues).

It localises to the nucleus. The protein resides in the chromosome. Functionally, plays a key role in meiotic progression by ensuring that sufficient numbers of processed DNA double-strand breaks (DSBs) are available for successful homology search, promoting synaptonemal-complex formation independently and playing key role in the male mid-pachytene checkpoint and the female meiotic prophase checkpoint. The chain is HORMA domain-containing protein 1 (hormad1) from Xenopus laevis (African clawed frog).